A 317-amino-acid polypeptide reads, in one-letter code: Aspartate carbamoyltransferase catalytic subunit (317 aa).

Carbamoyl phosphate contacts are provided by arginine 55 and threonine 56. Lysine 83 contributes to the L-aspartate binding site. The carbamoyl phosphate site is built by arginine 105, histidine 138, and glutamine 141. Residues arginine 171 and arginine 225 each contribute to the L-aspartate site. 2 residues coordinate carbamoyl phosphate: glycine 266 and proline 267.

Belongs to the aspartate/ornithine carbamoyltransferase superfamily. ATCase family. In terms of assembly, heterododecamer (2C3:3R2) of six catalytic PyrB chains organized as two trimers (C3), and six regulatory PyrI chains organized as three dimers (R2).

It carries out the reaction carbamoyl phosphate + L-aspartate = N-carbamoyl-L-aspartate + phosphate + H(+). The protein operates within pyrimidine metabolism; UMP biosynthesis via de novo pathway; (S)-dihydroorotate from bicarbonate: step 2/3. Its function is as follows. Catalyzes the condensation of carbamoyl phosphate and aspartate to form carbamoyl aspartate and inorganic phosphate, the committed step in the de novo pyrimidine nucleotide biosynthesis pathway. This chain is Aspartate carbamoyltransferase catalytic subunit, found in Mycobacteroides abscessus (strain ATCC 19977 / DSM 44196 / CCUG 20993 / CIP 104536 / JCM 13569 / NCTC 13031 / TMC 1543 / L948) (Mycobacterium abscessus).